Consider the following 463-residue polypeptide: Siroheme synthase (463 aa).

The precorrin-2 dehydrogenase /sirohydrochlorin ferrochelatase stretch occupies residues 1–203 (MDYLPLFHKL…GQGAEAERLL (203 aa)). Residues 22–23 (EI) and 43–44 (PD) contribute to the NAD(+) site. Ser128 is subject to Phosphoserine. The segment at 216-463 (GEVYLVGAGP…LAWFEGSQNS (248 aa)) is uroporphyrinogen-III C-methyltransferase. An S-adenosyl-L-methionine-binding site is contributed by Pro225. Asp248 acts as the Proton acceptor in catalysis. The active-site Proton donor is the Lys270. S-adenosyl-L-methionine is bound by residues 301-303 (GGD), Ile306, 331-332 (TA), Met383, and Gly412.

In the N-terminal section; belongs to the precorrin-2 dehydrogenase / sirohydrochlorin ferrochelatase family. The protein in the C-terminal section; belongs to the precorrin methyltransferase family.

The enzyme catalyses uroporphyrinogen III + 2 S-adenosyl-L-methionine = precorrin-2 + 2 S-adenosyl-L-homocysteine + H(+). It catalyses the reaction precorrin-2 + NAD(+) = sirohydrochlorin + NADH + 2 H(+). The catalysed reaction is siroheme + 2 H(+) = sirohydrochlorin + Fe(2+). It functions in the pathway cofactor biosynthesis; adenosylcobalamin biosynthesis; precorrin-2 from uroporphyrinogen III: step 1/1. The protein operates within cofactor biosynthesis; adenosylcobalamin biosynthesis; sirohydrochlorin from precorrin-2: step 1/1. Its pathway is porphyrin-containing compound metabolism; siroheme biosynthesis; precorrin-2 from uroporphyrinogen III: step 1/1. It participates in porphyrin-containing compound metabolism; siroheme biosynthesis; siroheme from sirohydrochlorin: step 1/1. It functions in the pathway porphyrin-containing compound metabolism; siroheme biosynthesis; sirohydrochlorin from precorrin-2: step 1/1. Its function is as follows. Multifunctional enzyme that catalyzes the SAM-dependent methylations of uroporphyrinogen III at position C-2 and C-7 to form precorrin-2 via precorrin-1. Then it catalyzes the NAD-dependent ring dehydrogenation of precorrin-2 to yield sirohydrochlorin. Finally, it catalyzes the ferrochelation of sirohydrochlorin to yield siroheme. This chain is Siroheme synthase, found in Pseudomonas putida (strain ATCC 700007 / DSM 6899 / JCM 31910 / BCRC 17059 / LMG 24140 / F1).